Consider the following 254-residue polypeptide: Thiazole synthase (254 aa).

Lysine 96 serves as the catalytic Schiff-base intermediate with DXP. Residues glycine 157, 183–184, and 205–206 contribute to the 1-deoxy-D-xylulose 5-phosphate site; these read AG and NT.

This sequence belongs to the ThiG family. In terms of assembly, homotetramer. Forms heterodimers with either ThiH or ThiS.

Its subcellular location is the cytoplasm. It catalyses the reaction [ThiS sulfur-carrier protein]-C-terminal-Gly-aminoethanethioate + 2-iminoacetate + 1-deoxy-D-xylulose 5-phosphate = [ThiS sulfur-carrier protein]-C-terminal Gly-Gly + 2-[(2R,5Z)-2-carboxy-4-methylthiazol-5(2H)-ylidene]ethyl phosphate + 2 H2O + H(+). It participates in cofactor biosynthesis; thiamine diphosphate biosynthesis. Catalyzes the rearrangement of 1-deoxy-D-xylulose 5-phosphate (DXP) to produce the thiazole phosphate moiety of thiamine. Sulfur is provided by the thiocarboxylate moiety of the carrier protein ThiS. In vitro, sulfur can be provided by H(2)S. The chain is Thiazole synthase from Clostridium perfringens (strain 13 / Type A).